We begin with the raw amino-acid sequence, 84 residues long: UPF0473 protein CPF_2030 (84 aa).

Belongs to the UPF0473 family.

This is UPF0473 protein CPF_2030 from Clostridium perfringens (strain ATCC 13124 / DSM 756 / JCM 1290 / NCIMB 6125 / NCTC 8237 / Type A).